A 192-amino-acid polypeptide reads, in one-letter code: Transposon Tn552 DNA-invertase BinR (192 aa).

Residues 1–136 (MKIGYARVST…AGRIAARARG (136 aa)) enclose the Resolvase/invertase-type recombinase catalytic domain. The active-site O-(5'-phospho-DNA)-serine intermediate is Ser-9. Positions 163-182 (IKTIAEQWKVSRTTIYRYLN) form a DNA-binding region, H-T-H motif.

This sequence belongs to the site-specific recombinase resolvase family.

In terms of biological role, DNA-invertase, mediating the inversion of inv. The protein is Transposon Tn552 DNA-invertase BinR (resR) of Staphylococcus aureus.